A 268-amino-acid chain; its full sequence is 5'-nucleotidase SurE (268 aa).

Residues Asp8, Asp9, Ser40, and Asn98 each contribute to the a divalent metal cation site.

It belongs to the SurE nucleotidase family. The cofactor is a divalent metal cation.

The protein resides in the cytoplasm. The enzyme catalyses a ribonucleoside 5'-phosphate + H2O = a ribonucleoside + phosphate. Its function is as follows. Nucleotidase that shows phosphatase activity on nucleoside 5'-monophosphates. The chain is 5'-nucleotidase SurE from Trichodesmium erythraeum (strain IMS101).